A 396-amino-acid polypeptide reads, in one-letter code: Proteinase-activated receptor 4 (396 aa).

An N-terminal signal peptide occupies residues 1–16 (MCWPLLYPLVLGLSIS). The propeptide at 17–59 (LAEGIQTPSIYDDVESTRGSHEGPLGPTVELKEPKSSDKPNPR) is removed for receptor activation. The interval 28–62 (DDVESTRGSHEGPLGPTVELKEPKSSDKPNPRGYP) is disordered. Positions 46–57 (ELKEPKSSDKPN) are enriched in basic and acidic residues. The Extracellular segment spans residues 60-94 (GYPGKFCANDSDTLELPASSQALLLGWVPTRLVPA). Residue asparagine 68 is glycosylated (N-linked (GlcNAc...) asparagine). Residues 95-115 (LYGLVVAVGLPANGLALWVLA) form a helical membrane-spanning segment. The Cytoplasmic segment spans residues 116-120 (TRVPR). Residues 121–141 (LPSTILLMNLAVADLLLALVL) form a helical membrane-spanning segment. At 142 to 162 (PPRLAYHLRGQRWPFGEAACR) the chain is on the extracellular side. Cysteine 161 and cysteine 240 are oxidised to a cystine. Residues 163-183 (VATAALYGHMYGSVLLLAAVS) form a helical membrane-spanning segment. Residues 184 to 203 (LDRYLALVHPLRARALRGQR) are Cytoplasmic-facing. A helical transmembrane segment spans residues 204-224 (LTTGLCLVAWLSAATLALPLT). Over 225 to 255 (LHRQTFRLAGSDRMLCHDALPLTEQTSHWRP) the chain is Extracellular. A helical membrane pass occupies residues 256 to 276 (AFICLAVLGCFVPLLAMGLCY). The Cytoplasmic segment spans residues 277–295 (GATLRALAANGQRYSHALR). The chain crosses the membrane as a helical span at residues 296–316 (LTALVLFSAVASFTPSNVLLV). The Extracellular segment spans residues 317–331 (LHYSNPSPEAWGNLY). Residues 332–355 (GAYVPSLALSTLNSCVDPFIYYYV) form a helical membrane-spanning segment. The Cytoplasmic segment spans residues 356 to 396 (SHEFREKVRAMLCRQPEASSSSQASREAGSRGTAICSSTLL).

The protein belongs to the G-protein coupled receptor 1 family. In terms of processing, a proteolytic cleavage generates a new N-terminus that functions as a tethered ligand. In terms of tissue distribution, highly expressed in the spleen. Slight expression in the heart, lung, skeletal muscle and kidney. No detectable expression in brain, liver or testis. Also detected in platelets.

It localises to the cell membrane. In terms of biological role, receptor for activated thrombin or trypsin coupled to G proteins that stimulate phosphoinositide hydrolysis. May play a role in platelets activation. In Mus musculus (Mouse), this protein is Proteinase-activated receptor 4 (F2rl3).